A 530-amino-acid chain; its full sequence is Protein transport protein SEC9 (530 aa).

The interval 1 to 274 (MGIKKMFQKK…QPANDYNLDL (274 aa)) is disordered. The segment covering 8 to 22 (QKKEPTEQEIREELS) has biased composition (basic and acidic residues). Low complexity-rich tracts occupy residues 61–100 (NPYA…NNGG) and 122–141 (GSSP…SSNP). Over residues 142–160 (YGNNNGSRSSQNTSSPYAK) the composition is skewed to polar residues. A compositionally biased stretch (low complexity) spans 161 to 202 (STNNSSYSNSPYSGSTVNNGNRGGHSNNSNSSAGGNPYAAGG). Polar residues-rich tracts occupy residues 203-228 (RSSQ…RQTQ) and 258-268 (RNQQSSQQPAN). T-SNARE coiled-coil homology domains lie at 313–375 (KFVK…VKEL) and 467–529 (DDME…LNNI).

Belongs to the SNAP-25 family.

Its subcellular location is the membrane. Its function is as follows. Late secretory t-SNARE protein required for secretion and proper cytokinesis. Plays an important role in the secretion of virulence-associated extracellular enzymes and vesicle-mediated polarized hyphal growth. This Candida albicans (strain SC5314 / ATCC MYA-2876) (Yeast) protein is Protein transport protein SEC9 (SEC9).